The primary structure comprises 896 residues: Translation initiation factor IF-2 (896 aa).

The tract at residues 1 to 260 (MDIENTNKPD…AQTNKKAHKA (260 aa)) is disordered. Residues 19 to 34 (KAADSKPESGKTDSKR) show a composition bias toward basic and acidic residues. The span at 56–66 (EESSGGKASGK) shows a compositional bias: low complexity. Basic and acidic residues predominate over residues 85–136 (SVKEKKPDERLEETKKTAPRFEDKKSDAPSAQNEKRSFDSAKKEEKQTERKK). Low complexity predominate over residues 168–177 (RGQGNRPQRP). A tr-type G domain is found at 375-544 (PRPPVVTIMG…LLQAEVLELK (170 aa)). A G1 region spans residues 384-391 (GHVDHGKT). 384–391 (GHVDHGKT) contacts GTP. Residues 409 to 413 (GITQH) form a G2 region. The interval 430-433 (DTPG) is G3. Residues 430–434 (DTPGH) and 484–487 (NKVD) contribute to the GTP site. The tract at residues 484–487 (NKVD) is G4. The G5 stretch occupies residues 520–522 (SAL). The segment at 877-896 (SDSEKYKAPEIKEEGTETDE) is disordered.

This sequence belongs to the TRAFAC class translation factor GTPase superfamily. Classic translation factor GTPase family. IF-2 subfamily.

The protein resides in the cytoplasm. Functionally, one of the essential components for the initiation of protein synthesis. Protects formylmethionyl-tRNA from spontaneous hydrolysis and promotes its binding to the 30S ribosomal subunits. Also involved in the hydrolysis of GTP during the formation of the 70S ribosomal complex. The polypeptide is Translation initiation factor IF-2 (Treponema denticola (strain ATCC 35405 / DSM 14222 / CIP 103919 / JCM 8153 / KCTC 15104)).